An 852-amino-acid polypeptide reads, in one-letter code: 2-deoxy-glucose resistant protein 2 (852 aa).

Residues 1–18 (MFKSKTSTLSYDETPNSN) show a composition bias toward polar residues. The interval 1-60 (MFKSKTSTLSYDETPNSNEGDRNATPVNPKEKSQTKHLNIPGDRSRHSSIADSKRSSSRY) is disordered. WD repeat units follow at residues 171–210 (LFKN…VKRS), 278–316 (EHAL…SLKT), 318–358 (VHPD…VSYA), 426–471 (QHGP…ELFK), 476–515 (GSSR…LSAE), and 651–689 (GFSS…EIRK). Serine 716 carries the phosphoserine modification. Residues 723–748 (DERSSTEDNEFSTTPPSNTHNSRPSH) are disordered. Over residues 733–744 (FSTTPPSNTHNS) the composition is skewed to polar residues.

This sequence belongs to the WD repeat DGR2 family.

The sequence is that of 2-deoxy-glucose resistant protein 2 (DGR2) from Saccharomyces cerevisiae (strain ATCC 204508 / S288c) (Baker's yeast).